The primary structure comprises 123 residues: SGSCEVKTCWWAQPDFRAIGDYLKDKYDSASEMAVEKHRESRGWVETLRARYALFKPPTERDLVYYEGSPNFCEPNPETGSFGTKDRTCNVTSHGIDGCDLLCCGRGHNTRTEKRKEKCHCIF.

Residue Ser-1 is the site of O-palmitoleoyl serine; by PORCN attachment. Cys-89 and Cys-104 are oxidised to a cystine. Asn-90 carries N-linked (GlcNAc...) asparagine glycosylation.

The protein belongs to the Wnt family. Post-translationally, palmitoleoylation is required for efficient binding to frizzled receptors. Depalmitoleoylation leads to Wnt signaling pathway inhibition.

The protein localises to the secreted. It is found in the extracellular space. It localises to the extracellular matrix. Ligand for members of the frizzled family of seven transmembrane receptors. Probable developmental protein. May be a signaling molecule which affects the development of discrete regions of tissues. Is likely to signal over only few cell diameters. The polypeptide is Protein Wnt-3b (WNT-3B) (Plethodon jordani (Red-cheeked salamander)).